A 548-amino-acid polypeptide reads, in one-letter code: Membrane protein insertase YidC (548 aa).

A helical membrane pass occupies residues 6–26; it reads NLLVIALLFVSFMIWQAWEQD. Residues 28–56 form a disordered region; the sequence is NPQPQTQQTTQTTTTAAGSAADQGVPASG. Positions 29–42 are enriched in low complexity; it reads PQPQTQQTTQTTTT. The next 4 membrane-spanning stretches (helical) occupy residues 350–370, 424–444, 458–478, and 499–519; these read FVGNWGFSIIIITFIVRGIMY, FPLIIQMPIFLALYYMLMGSI, LSAQDPYYILPILMGVTMFFI, and PVIFTVFFLWFPSGLVLYYIV.

Belongs to the OXA1/ALB3/YidC family. Type 1 subfamily. Interacts with the Sec translocase complex via SecD. Specifically interacts with transmembrane segments of nascent integral membrane proteins during membrane integration.

It localises to the cell inner membrane. In terms of biological role, required for the insertion and/or proper folding and/or complex formation of integral membrane proteins into the membrane. Involved in integration of membrane proteins that insert both dependently and independently of the Sec translocase complex, as well as at least some lipoproteins. Aids folding of multispanning membrane proteins. This is Membrane protein insertase YidC from Salmonella paratyphi C (strain RKS4594).